Consider the following 223-residue polypeptide: MQYLTQEQAIKLDEELMGKYKYSLVQLMEIAGLAVAQVVTKEYPIEKGNKRVLILCGPGNNGGDGLVCGRYLSLFGYEVTVFYPKQSKNEHLQLLIKQLEIQDIPVVTELSSFEYDAIVDAVFGFSFKGPVRGIFKDIFSHINSLKVPIISVDIPSGWDVEQGYLQDGIQRCDVLISLSAPKLGVKNFKGIHYLGGRFIPLELKDKLHLILPYKENELIVKIN.

In terms of domain architecture, YjeF N-terminal spans 9–211; it reads AIKLDEELMG…ELKDKLHLIL (203 aa). A (6S)-NADPHX-binding site is contributed by 60 to 64; it reads NNGGD. Residues Asn61 and Asp120 each contribute to the K(+) site. (6S)-NADPHX is bound by residues 124–130 and Asp153; that span reads GFSFKGP. Ser156 is a K(+) binding site.

This sequence belongs to the NnrE/AIBP family. The cofactor is K(+).

The enzyme catalyses (6R)-NADHX = (6S)-NADHX. It catalyses the reaction (6R)-NADPHX = (6S)-NADPHX. Catalyzes the epimerization of the S- and R-forms of NAD(P)HX, a damaged form of NAD(P)H that is a result of enzymatic or heat-dependent hydration. This is a prerequisite for the S-specific NAD(P)H-hydrate dehydratase to allow the repair of both epimers of NAD(P)HX. The sequence is that of NAD(P)H-hydrate epimerase from Entamoeba histolytica (strain ATCC 30459 / HM-1:IMSS / ABRM).